The chain runs to 539 residues: ATP synthase subunit beta (539 aa).

The interval 1-44 (MAKTPAEKPATAAKKPAAPKAAAAPKAAAAKAPAAAKAPAAKKP) is disordered. 212-219 (GGAGVGKT) is an ATP binding site.

This sequence belongs to the ATPase alpha/beta chains family. F-type ATPases have 2 components, CF(1) - the catalytic core - and CF(0) - the membrane proton channel. CF(1) has five subunits: alpha(3), beta(3), gamma(1), delta(1), epsilon(1). CF(0) has three main subunits: a(1), b(2) and c(9-12). The alpha and beta chains form an alternating ring which encloses part of the gamma chain. CF(1) is attached to CF(0) by a central stalk formed by the gamma and epsilon chains, while a peripheral stalk is formed by the delta and b chains.

Its subcellular location is the cell inner membrane. It carries out the reaction ATP + H2O + 4 H(+)(in) = ADP + phosphate + 5 H(+)(out). Produces ATP from ADP in the presence of a proton gradient across the membrane. The catalytic sites are hosted primarily by the beta subunits. This Caulobacter vibrioides (strain ATCC 19089 / CIP 103742 / CB 15) (Caulobacter crescentus) protein is ATP synthase subunit beta.